The following is a 398-amino-acid chain: Cysteine desulfurase (398 aa).

Pyridoxal 5'-phosphate is bound by residues 74 to 75 (GT), Asn155, Gln182, and 202 to 204 (CGH). Residue Lys205 is modified to N6-(pyridoxal phosphate)lysine. A compositionally biased stretch (basic and acidic residues) spans 230-244 (GHQERSRRAGNGERA). A disordered region spans residues 230-253 (GHQERSRRAGNGERAGHRRAGGGA). The Cysteine persulfide intermediate role is filled by Cys327. Position 327 (Cys327) interacts with [2Fe-2S] cluster.

This sequence belongs to the class-V pyridoxal-phosphate-dependent aminotransferase family. NifS/IscS subfamily. Homodimer. Pyridoxal 5'-phosphate is required as a cofactor.

It catalyses the reaction (sulfur carrier)-H + L-cysteine = (sulfur carrier)-SH + L-alanine. In terms of biological role, catalyzes the removal of elemental sulfur atoms from cysteine to produce alanine. Seems to participate in the biosynthesis of the nitrogenase metalloclusters by providing the inorganic sulfur required for the Fe-S core formation. The sequence is that of Cysteine desulfurase from Azospirillum brasilense.